We begin with the raw amino-acid sequence, 297 residues long: Ketohexokinase (297 aa).

Beta-D-fructose is bound by residues aspartate 15, glycine 41, asparagine 42, and asparagine 45. ATP-binding positions include arginine 107, 225–228 (AEEG), and 254–257 (GAGD). Residue aspartate 257 participates in beta-D-fructose binding.

This sequence belongs to the carbohydrate kinase PfkB family. In terms of assembly, homodimer.

It carries out the reaction beta-D-fructose + ATP = beta-D-fructose 1-phosphate + ADP + H(+). It functions in the pathway carbohydrate metabolism; fructose metabolism. With respect to regulation, requires potassium. Inhibition by ADP. Its function is as follows. Catalyzes the phosphorylation of the ketose sugar fructose to fructose-1-phosphate. In Pongo abelii (Sumatran orangutan), this protein is Ketohexokinase (KHK).